The primary structure comprises 107 residues: MVASCHTLTIIPKEARSNCYRAYSRASCWCCLRTDNVRMCRRPPQNLLASVQRSRLRRKGPINGNQGSAIPTQSADCGLQHPYLWTRNPTPRGLSRLAASVPTAPEP.

Disordered stretches follow at residues 51 to 75 (VQRSRLRRKGPINGNQGSAIPTQSA) and 88 to 107 (NPTPRGLSRLAASVPTAPEP). Over residues 63-75 (NGNQGSAIPTQSA) the composition is skewed to polar residues.

This is an uncharacterized protein from Fowl adenovirus A serotype 1 (strain CELO / Phelps) (FAdV-1).